Consider the following 239-residue polypeptide: Carboxy-S-adenosyl-L-methionine synthase (239 aa).

Residues Tyr-35, 64-66, 88-89, and Arg-195 each bind S-adenosyl-L-methionine; these read GCS and DN.

It belongs to the class I-like SAM-binding methyltransferase superfamily. Cx-SAM synthase family. As to quaternary structure, homodimer.

The catalysed reaction is prephenate + S-adenosyl-L-methionine = carboxy-S-adenosyl-L-methionine + 3-phenylpyruvate + H2O. Its function is as follows. Catalyzes the conversion of S-adenosyl-L-methionine (SAM) to carboxy-S-adenosyl-L-methionine (Cx-SAM). The polypeptide is Carboxy-S-adenosyl-L-methionine synthase (Helicobacter pylori (strain Shi470)).